The sequence spans 335 residues: Antigen-presenting glycoprotein CD1d (335 aa).

A signal peptide spans 1-17 (MGCLLFLVLLEFQKIWG). Residues 18-304 (SFEAPQTSFP…WDGKRVSRGL (287 aa)) are Extracellular-facing. N-linked (GlcNAc...) asparagine glycans are attached at residues Asn38 and Asn60. Asp98 contacts a D-galactosylceramide. Disulfide bonds link Cys120/Cys184 and Cys224/Cys279. Residue Asn126 is glycosylated (N-linked (GlcNAc...) asparagine). Residues Asp169, 169-172 (DQGT), and Thr172 each bind a D-galactosylceramide. The Ig-like domain occupies 185 to 295 (PELVKGLMQT…LGDQDIILYW (111 aa)). A helical transmembrane segment spans residues 305-325 (IVVLVILVFVLLFVGGLVFWF). At 326-335 (RKHRRYQDIS) the chain is on the cytoplasmic side. Positions 331-334 (YQDI) match the Internalization signal motif.

Heterodimer with B2M (beta-2-microglobulin). Interacts with MHC II and CD74. As to expression, expressed on cortical thymocytes, on certain T-cell leukemias, and in various other tissues.

Its subcellular location is the cell membrane. It localises to the basolateral cell membrane. The protein localises to the endosome membrane. The protein resides in the lysosome membrane. It is found in the endoplasmic reticulum membrane. Antigen-presenting protein that binds self and non-self glycolipids and presents them to T-cell receptors on natural killer T-cells. The polypeptide is Antigen-presenting glycoprotein CD1d (CD1D) (Ovis aries (Sheep)).